Here is a 226-residue protein sequence, read N- to C-terminus: Lysosomal-associated transmembrane protein 4B (226 aa).

4 helical membrane passes run 26–46, 72–92, 100–120, and 153–173; these read ILLG…LLSA, MCIA…ATYG, WIIP…LVAI, and CLVL…GYLI. The required for NEDD4 interaction stretch occupies residues 205 to 221; it reads PPYDDATVNGAAKEPPP.

Belongs to the LAPTM4/LAPTM5 transporter family. Homooligomer; upon reaching the lysosomes. Interacts with MCOLN1. Interacts with NEDD4; may play a role in the lysosomal sorting of LAPTM4B; enhances HGS association with NEDD4; mediates inhibition of EGFR degradation. Interacts with PIP5K1C; promotes SNX5 association with LAPTM4B; kinase activity of PIP5K1C is required; interaction is regulated by phosphatidylinositol 4,5-bisphosphate generated by PIP5K1C. Interacts with HGS; promotes HGS ubiquitination. Interacts with SNX5. Interacts with SLC3A2 and SLC7A5; recruits SLC3A2 and SLC7A5 to lysosomes to promote leucine uptake into these organelles and is required for mTORC1 activation. Interacts with LRRC32; decreases TGFB1 production in regulatory T cells. Interacts with BECN1; competes with EGFR for LAPTM4B binding; regulates EGFR activity. Interacts with EGFR; positively correlates with EGFR activation. Post-translationally, undergoes proteolytic cleavage following delivery to the lysosomes. Ubiquitinated by NEDD4.

It localises to the endomembrane system. Its subcellular location is the late endosome membrane. The protein localises to the cell membrane. The protein resides in the cell projection. It is found in the lysosome membrane. It localises to the endosome membrane. Its subcellular location is the endosome. The protein localises to the multivesicular body membrane. The protein resides in the multivesicular body lumen. Required for optimal lysosomal function. Blocks EGF-stimulated EGFR intraluminal sorting and degradation. Conversely by binding with the phosphatidylinositol 4,5-bisphosphate, regulates its PIP5K1C interaction, inhibits HGS ubiquitination and relieves LAPTM4B inhibition of EGFR degradation. Recruits SLC3A2 and SLC7A5 (the Leu transporter) to the lysosome, promoting entry of leucine and other essential amino acid (EAA) into the lysosome, stimulating activation of proton-transporting vacuolar (V)-ATPase protein pump (V-ATPase) and hence mTORC1 activation. Plays a role as negative regulator of TGFB1 production in regulatory T cells. Binds ceramide and facilitates its exit from late endosome in order to control cell death pathways. The chain is Lysosomal-associated transmembrane protein 4B from Macaca fascicularis (Crab-eating macaque).